Here is a 577-residue protein sequence, read N- to C-terminus: Torulene dioxygenase (577 aa).

The segment at 1–20 (MALNGPGVYHRTREHEQEDA) is disordered. Fe(2+) contacts are provided by histidine 239, histidine 291, histidine 361, and histidine 570.

This sequence belongs to the carotenoid oxygenase family. Fe(2+) serves as cofactor.

The protein localises to the cytoplasm. It is found in the cytosol. It catalyses the reaction torulene + O2 = 4'-apo-beta-carotenal + 3-methyl-2-butenal. It functions in the pathway carotenoid biosynthesis. Its function is as follows. Torulene dioxygenase; part of pathway that mediates the biosynthesis of neurosporaxanthin, a carboxylic apocarotenoid acting as an essential protective pigments and leading to orange pigmentation. CarT mediates the cleavage of torulene into beta-apo-4'-carotenal, the aldehyde corresponding to the acidic neurosporaxanthin. Is also active on other monocyclic synthetic substrates such as beta-apo-8'-carotenal and beta-apo-10'-carotenal to produce beta-apo-14'-carotenal and retinal(beta-apo-15'-carotenal), respectively. Neurosporaxanthin is synthesized from geranyl-geranyl pyrophosphate (GGPP) through several enzymatic activities. Phytoene synthase activity performed by the bifunctional enzyme carAR first produces phytoene from geranyl-geranyl pyrophosphate (GGPP). The phytoene dehydrogenase carB then introduces 4 desaturations to lead to lycopene which is substrate of the carotene cyclase activity of carAR that leads to the production of gamma-carotene. CarB then performs a 5th desaturation reaction to yield torulene. Torulene is the substrate of the dioxidase carT that breaks the molecule, removing five carbon atoms to yield beta-apo-4'-carotenal, whereas the aldehyde dehydrogenase carD mediates the last step by converting beta-apo-4'-carotenal into neurosporaxanthin. This chain is Torulene dioxygenase, found in Gibberella fujikuroi (strain CBS 195.34 / IMI 58289 / NRRL A-6831) (Bakanae and foot rot disease fungus).